Here is a 96-residue protein sequence, read N- to C-terminus: UPF0251 protein Shal_3723 (96 aa).

It belongs to the UPF0251 family.

This is UPF0251 protein Shal_3723 from Shewanella halifaxensis (strain HAW-EB4).